The sequence spans 543 residues: Chaperonin GroEL (543 aa).

Residues 29–32, 86–90, Gly413, 476–478, and Asp492 each bind ATP; these read TLGP, DGTTT, and NAA.

It belongs to the chaperonin (HSP60) family. In terms of assembly, forms a cylinder of 14 subunits composed of two heptameric rings stacked back-to-back. Interacts with the co-chaperonin GroES.

It localises to the cytoplasm. The enzyme catalyses ATP + H2O + a folded polypeptide = ADP + phosphate + an unfolded polypeptide.. In terms of biological role, together with its co-chaperonin GroES, plays an essential role in assisting protein folding. The GroEL-GroES system forms a nano-cage that allows encapsulation of the non-native substrate proteins and provides a physical environment optimized to promote and accelerate protein folding. The chain is Chaperonin GroEL from Streptococcus pyogenes serotype M1.